The sequence spans 381 residues: MKIRSLLANCYLYFLSAIAFFLQWVKPESKVTLLISFEANAKAILEEYEQGQYSYKLNILYTQQASAIAESFPNVDAYLLQEKNPIHLIKAVYLMFNSKVIITDNYFLLTSVLNKRKQTKCIQVWHANGSLKKFGLEDITNMQRTKTDIKRFQKVYSSYDYLTVGSEEMANIFKKSFGIKDNQLLKIGVPLTDPYYRENKKKISDTLNIQRKKIILYAPTFRDYNMQSIQLPFTEEQLIHQLKEEYVLFVKLHPAIQNNIDIKYSSDYIKDVSNYALFDLLMAADILITDYSSVPFEFSILNKPILFYTYDLKLYQQKRGLVDNYLSIIPGRACYDSESLINEIQTPFNYSKIKVFSDRWNKYSDGNSSQNLLNFIENLIS.

The protein belongs to the CDP-glycerol glycerophosphotransferase family.

Its subcellular location is the cell membrane. The enzyme catalyses N-acetyl-beta-D-mannosaminyl-(1-&gt;4)-N-acetyl-alpha-D-glucosaminyl di-trans,octa-cis-undecaprenyl diphosphate + CDP-glycerol = 4-O-[(2R)-glycerylphospho]-N-acetyl-beta-D-mannosaminyl-(1-&gt;4)-N-acetyl-alpha-D-glucosaminyl di-trans,octa-cis-undecaprenyl diphosphate + CMP + H(+). Its pathway is cell wall biogenesis; poly(glycerol phosphate) teichoic acid biosynthesis. In terms of biological role, catalyzes the addition of a single glycerol phosphate residue to the prenoldiphosphate-linked disaccharide, as a primer for polymerisation by TagF. This Bacillus subtilis (strain 168) protein is Teichoic acid glycerol-phosphate primase (tagB).